The following is a 479-amino-acid chain: Bifunctional AAC/APH (479 aa).

Residues 8-180 enclose the N-acetyltransferase domain; it reads ICIRTLIDDD…DCYLMEYRYD (173 aa). The acetyl-CoA binding site stretch occupies residues 110 to 153; the sequence is KGIGTRYIKLIFEFLKKERNANAVILDPHKNNPRAIRAYQKSGF. D374 (proton acceptor; for phosphotransferase activity) is an active-site residue. An a gentamycin-binding site is contributed by D393.

The protein in the C-terminal section; belongs to the aminoglycoside phosphotransferase family.

It is found in the cytoplasm. It catalyses the reaction a gentamycin + GTP = a gentamycin 2''-phosphate + GDP + H(+). Its function is as follows. Involved in resistance to gentamicin, tobramycin, and kanamycin. Tobramycin and kanamycin resistance is due to the ACC activity, specified by N-terminal region. The C-terminal region is a kinase that phosphorylates several 4,6-disubstituted aminoglycosides. This Enterococcus faecalis (strain ATCC 700802 / V583) protein is Bifunctional AAC/APH (aacA-aphD).